The primary structure comprises 122 residues: Large ribosomal subunit protein uL14 (122 aa).

Belongs to the universal ribosomal protein uL14 family. Part of the 50S ribosomal subunit. Forms a cluster with proteins L3 and L19. In the 70S ribosome, L14 and L19 interact and together make contacts with the 16S rRNA in bridges B5 and B8.

Functionally, binds to 23S rRNA. Forms part of two intersubunit bridges in the 70S ribosome. This chain is Large ribosomal subunit protein uL14, found in Dehalococcoides mccartyi (strain ATCC BAA-2266 / KCTC 15142 / 195) (Dehalococcoides ethenogenes (strain 195)).